The primary structure comprises 281 residues: MEMO1 family protein Pars_0062 (281 aa).

Belongs to the MEMO1 family.

The sequence is that of MEMO1 family protein Pars_0062 from Pyrobaculum arsenaticum (strain DSM 13514 / JCM 11321 / PZ6).